A 565-amino-acid chain; its full sequence is NAD-dependent malic enzyme (565 aa).

The active-site Proton donor is Tyr-104. An NAD(+)-binding site is contributed by Arg-157. Residue Lys-175 is the Proton acceptor of the active site. Positions 246, 247, and 270 each coordinate a divalent metal cation. NAD(+)-binding residues include Asp-270 and Asn-418.

Belongs to the malic enzymes family. In terms of assembly, homotetramer. Requires Mg(2+) as cofactor. The cofactor is Mn(2+).

It catalyses the reaction (S)-malate + NAD(+) = pyruvate + CO2 + NADH. The enzyme catalyses oxaloacetate + H(+) = pyruvate + CO2. This chain is NAD-dependent malic enzyme, found in Pectobacterium carotovorum subsp. carotovorum (strain PC1).